The primary structure comprises 110 residues: UPF0122 protein SP70585_1353 (110 aa).

It belongs to the UPF0122 family.

Functionally, might take part in the signal recognition particle (SRP) pathway. This is inferred from the conservation of its genetic proximity to ftsY/ffh. May be a regulatory protein. This is UPF0122 protein SP70585_1353 from Streptococcus pneumoniae (strain 70585).